The following is a 370-amino-acid chain: 4-hydroxy-3-methylbut-2-en-1-yl diphosphate synthase (flavodoxin) (370 aa).

[4Fe-4S] cluster-binding residues include Cys268, Cys271, Cys303, and Glu310.

It belongs to the IspG family. [4Fe-4S] cluster serves as cofactor.

The catalysed reaction is (2E)-4-hydroxy-3-methylbut-2-enyl diphosphate + oxidized [flavodoxin] + H2O + 2 H(+) = 2-C-methyl-D-erythritol 2,4-cyclic diphosphate + reduced [flavodoxin]. It participates in isoprenoid biosynthesis; isopentenyl diphosphate biosynthesis via DXP pathway; isopentenyl diphosphate from 1-deoxy-D-xylulose 5-phosphate: step 5/6. In terms of biological role, converts 2C-methyl-D-erythritol 2,4-cyclodiphosphate (ME-2,4cPP) into 1-hydroxy-2-methyl-2-(E)-butenyl 4-diphosphate. This Bacillus cereus (strain B4264) protein is 4-hydroxy-3-methylbut-2-en-1-yl diphosphate synthase (flavodoxin).